Reading from the N-terminus, the 387-residue chain is MTGKLAEKLPVTMSSLLNQLPDNLYPEEIPSALNLFSGSSDSVVHYNQMATENVMDIGLTNEKPNPELSYSGSFQPAPGNKTVTYLGKFAFDSPSNWCQDNIISLMSAGILGVPPASGALSTQTSTASMVQPPQGDVEAMYPALPPYSNCGDLYSEPVSFHDPQGNPGLAYSPQDYQSAKPALDSNLFPMIPDYNLYHHPNDMGSIPEHKPFQGMDPIRVNPPPITPLETIKAFKDKQIHPGFGSLPQPPLTLKPIRPRKYPNRPSKTPLHERPHACPAEGCDRRFSRSDELTRHLRIHTGHKPFQCRICMRSFSRSDHLTTHIRTHTGEKPFACEFCGRKFARSDERKRHAKIHLKQKEKKAEKGGAPSASSAPPVSLAPVVTTCA.

The tract at residues 241 to 283 (PGFGSLPQPPLTLKPIRPRKYPNRPSKTPLHERPHACPAEGCD) is disordered. A compositionally biased stretch (basic and acidic residues) spans 269-283 (PLHERPHACPAEGCD). 3 C2H2-type zinc fingers span residues 275 to 299 (HACP…LRIH), 305 to 327 (FQCR…IRTH), and 333 to 355 (FACE…AKIH). The disordered stretch occupies residues 348–387 (RKRHAKIHLKQKEKKAEKGGAPSASSAPPVSLAPVVTTCA). The segment covering 350–360 (RHAKIHLKQKE) has biased composition (basic residues). Residues 368-387 (APSASSAPPVSLAPVVTTCA) show a composition bias toward low complexity.

The protein belongs to the EGR C2H2-type zinc-finger protein family.

The protein localises to the nucleus. In terms of biological role, probable transcription factor involved in muscle spindle development. The chain is Early growth response protein 3 (EGR3) from Homo sapiens (Human).